The chain runs to 226 residues: MKIIPVIDLKDKIAVHGKSGNRDEYKPLESVICKSSNPIEVAKAYKERGAKTIYIADLNFIMGNGDNFDIIKEIDFINKIVDIGVKSREDLETIKKVLNKDDRAIVATETLKDIELLKEKDIVVSLDFKNGNLLNYSLDEILSCVRDDTPLIILDISSVGTQRGVNAELIKYVLDKTNNPVYVGGGIKGMEDLELCYNLGVDAVLIATAIHKGVLDLEEIINKFGD.

Belongs to the HisA/HisF family.

This is an uncharacterized protein from Methanocaldococcus jannaschii (strain ATCC 43067 / DSM 2661 / JAL-1 / JCM 10045 / NBRC 100440) (Methanococcus jannaschii).